A 141-amino-acid polypeptide reads, in one-letter code: Hemoglobin subunit alpha (141 aa).

The region spanning 1 to 141 is the Globin domain; it reads VLSAADKTAI…VATALGSHYR (141 aa). His-59 contacts O2. A heme b-binding site is contributed by His-88.

It belongs to the globin family. Heterotetramer of two alpha chains and two beta chains. Red blood cells.

Involved in oxygen transport from the lung to the various peripheral tissues. This is Hemoglobin subunit alpha (HBA) from Squalus acanthias (Spiny dogfish).